A 403-amino-acid chain; its full sequence is S-adenosylmethionine synthase (403 aa).

Position 17 (H17) interacts with ATP. A Mg(2+)-binding site is contributed by D19. E45 is a K(+) binding site. L-methionine-binding residues include E58 and Q104. The interval 104-114 (QSPDIAQGVDT) is flexible loop. ATP-binding positions include 179–181 (DGK), 250–251 (KF), D259, 265–266 (RK), A282, and K286. D259 provides a ligand contact to L-methionine. K290 contributes to the L-methionine binding site.

Belongs to the AdoMet synthase family. In terms of assembly, homotetramer; dimer of dimers. Requires Mg(2+) as cofactor. It depends on K(+) as a cofactor.

Its subcellular location is the cytoplasm. The catalysed reaction is L-methionine + ATP + H2O = S-adenosyl-L-methionine + phosphate + diphosphate. Its pathway is amino-acid biosynthesis; S-adenosyl-L-methionine biosynthesis; S-adenosyl-L-methionine from L-methionine: step 1/1. In terms of biological role, catalyzes the formation of S-adenosylmethionine (AdoMet) from methionine and ATP. The overall synthetic reaction is composed of two sequential steps, AdoMet formation and the subsequent tripolyphosphate hydrolysis which occurs prior to release of AdoMet from the enzyme. The polypeptide is S-adenosylmethionine synthase (Mycobacterium ulcerans (strain Agy99)).